We begin with the raw amino-acid sequence, 174 residues long: CD164 sialomucin-like 2 protein (174 aa).

The first 29 residues, 1–29 (MEAPGPRALRTALCGGCCCLLLCAQLAVA), serve as a signal peptide directing secretion. Over 30-141 (GKGARGFGRG…AHSPGFDGAS (112 aa)) the chain is Extracellular. N-linked (GlcNAc...) asparagine glycosylation is found at N71 and N103. The chain crosses the membrane as a helical span at residues 142–162 (FIGGVVLVLSLQAVAFFVLHF). The Cytoplasmic portion of the chain corresponds to 163–174 (LKAKDSTYQTLI).

It belongs to the CD164 family.

The protein resides in the membrane. This chain is CD164 sialomucin-like 2 protein (CD164L2), found in Homo sapiens (Human).